A 639-amino-acid chain; its full sequence is Chaperone protein DnaK (639 aa).

Thr-196 bears the Phosphothreonine; by autocatalysis mark. Residues 592 to 639 (ASSLYQTPDAGAPGASGPSAGGEPETGKKGGDGEVQNAEYEVIDGNDK) form a disordered region. Residues 601 to 613 (AGAPGASGPSAGG) show a composition bias toward low complexity.

It belongs to the heat shock protein 70 family.

In terms of biological role, acts as a chaperone. The sequence is that of Chaperone protein DnaK from Chlorobium limicola (strain DSM 245 / NBRC 103803 / 6330).